Here is a 335-residue protein sequence, read N- to C-terminus: Peflin (335 aa).

Over residues 23 to 37 (AMEETRREFEKEKQR) the composition is skewed to basic and acidic residues. Residues 23–92 (AMEETRREFE…SPRHTKTPVD (70 aa)) form a disordered region. The span at 43–53 (VTQAQTPNTRV) shows a compositional bias: polar residues. EF-hand domains lie at 144–192 (KVAP…DDNS), 198–223 (SVDA…IALY), 224–259 (KRVK…LGYL), 260–300 (IPFE…LMRL), and 301–332 (TKLF…LGRF). Ca(2+) is bound by residues D170, R176, and E181. Positions 237, 239, 241, 243, and 248 each coordinate Ca(2+).

As to quaternary structure, homodimer.

The protein resides in the cytoplasm. It localises to the nucleus. The protein localises to the bud tip. Its subcellular location is the bud neck. Functionally, calcium-binding protein that is required for polar bud growth and cell wall abscission. Can also bind zinc ions. In Saccharomyces cerevisiae (strain ATCC 204508 / S288c) (Baker's yeast), this protein is Peflin (PEF1).